A 217-amino-acid polypeptide reads, in one-letter code: Dihydroflavonol 4-reductase (217 aa).

Lys-27 and Tyr-146 together coordinate NADP(+).

It belongs to the NAD(P)-dependent epimerase/dehydratase family. Dihydroflavonol-4-reductase subfamily.

It carries out the reaction a (2R,3S,4S)-leucoanthocyanidin + NADP(+) = a (2R,3R)-dihydroflavonol + NADPH + H(+). The enzyme catalyses (2S)-flavan-4-ol + NADP(+) = (2S)-flavanone + NADPH + H(+). The protein operates within pigment biosynthesis; anthocyanin biosynthesis. Its function is as follows. Bifunctional enzyme involved in flavonoid metabolism. The sequence is that of Dihydroflavonol 4-reductase (DFR1) from Medicago sativa (Alfalfa).